A 41-amino-acid polypeptide reads, in one-letter code: Pi-stichotoxin-Hcr5b (41 aa).

3 disulfides stabilise this stretch: C4–C37, C6–C30, and C20–C38.

It belongs to the sea anemone type 3 (BDS) potassium channel toxin family.

It is found in the secreted. Its subcellular location is the nematocyst. Its function is as follows. Remarkably non-selective toxin, with activity on many different ion channels. Weakly and reversibly inhibits rat and human homomeric ASIC1 (isoform ASIC1a) (IC(50)=4.8 uM, and IC(50)=14.6 uM), and ASIC3 (IC(50)=15.9 uM). Molecular modeling interaction with ASIC1a suggests that this peptide hinders the collapse of acidic pockets and stabilizes nonconducting channels state. It activates several potassium channels including Kv1.1/KCNA1, Kv1.2/KCNA2, and drosophila Shaker IR. It moderately to potently inhibits potassium channels including Kv1.3/KCNA3, Kv1.4/KCNA4, Kv1.5/KCNA5, Kv1.6/KCNA6, Kv2.1/KCNB1, Kv4.2/KCND2, Kv7.1/KCNQ1, Kv7.2/Kv7.3 (KCNQ2/KCNQ3), Kv7.4/KCNQ4, hERG/KCNH2, and C.elegans QKT1. On sodium channels, it moderately to potently inhibits Nav1.1/SCN1A, Nav1.2/SCN2A, Nav1.3/SCN3A, Nav1.4/SCN4A, Nav1.5/SCN5A, Nav1.6/SCN8A, Nav1.7/SCN9A, Nav1.8/SCN10A, and B.germanica BgNav. It also moderately to potently inhibits Cav3.1/CACNA1G, Cav3.2/CACNA1H, and Cav3.3/CACNA1I. Significant shifts in the voltage-current relationship are observed on Kv and Nav, depending on the channel isoform, whereas the toxin does not seem to modulate the voltage-sensor domains of Cav channels, acting mainly as a pore blocker. Does not activate nicotinic acetylcholine receptors (nAChR), but potentiates ACh-elicited current of human alpha-7/CHRNA7 nAChR. Is also able to bind T.californica muscle-type nAChRs. In vivo, causes an excitatory effect in mice behavior. Also shows antihyperalgesic and analgesic activity in the acid-induced muscle pain mice model, and weak anti-inflammatory effect in models of acute local inflammation. This is Pi-stichotoxin-Hcr5b from Radianthus crispa (Leathery sea anemone).